Reading from the N-terminus, the 509-residue chain is Lysine--tRNA ligase (509 aa).

The Mg(2+) site is built by glutamate 417 and glutamate 424.

Belongs to the class-II aminoacyl-tRNA synthetase family. Homodimer. Requires Mg(2+) as cofactor.

It localises to the cytoplasm. It carries out the reaction tRNA(Lys) + L-lysine + ATP = L-lysyl-tRNA(Lys) + AMP + diphosphate. This chain is Lysine--tRNA ligase, found in Blochmanniella pennsylvanica (strain BPEN).